The sequence spans 435 residues: Hyaluronidase-1 (435 aa).

An N-terminal signal peptide occupies residues 1 to 21 (MAAHLLPICTLFLNLLSVAQG). 2 disulfides stabilise this stretch: C43/C333 and C207/C221. N70, N99, N107, and N121 each carry an N-linked (GlcNAc...) asparagine glycan. E131 serves as the catalytic Proton donor. Residues N216, N256, and N350 are each glycosylated (N-linked (GlcNAc...) asparagine). 3 cysteine pairs are disulfide-bonded: C358-C369, C363-C418, and C420-C429. The 12-residue stretch at 418–429 (CRCYPGWRGTWC) folds into the EGF-like domain.

Belongs to the glycosyl hydrolase 56 family. Highly expressed in spleen, kidney, and lung.

The protein localises to the secreted. Its subcellular location is the lysosome. It carries out the reaction Random hydrolysis of (1-&gt;4)-linkages between N-acetyl-beta-D-glucosamine and D-glucuronate residues in hyaluronate.. In terms of biological role, may have a role in promoting tumor progression. May block the TGFB1-enhanced cell growth. The sequence is that of Hyaluronidase-1 (HYAL1) from Sus scrofa (Pig).